The primary structure comprises 155 residues: Urease accessory protein UreE (155 aa).

It belongs to the UreE family.

It is found in the cytoplasm. Its function is as follows. Involved in urease metallocenter assembly. Binds nickel. Probably functions as a nickel donor during metallocenter assembly. The chain is Urease accessory protein UreE from Deinococcus radiodurans (strain ATCC 13939 / DSM 20539 / JCM 16871 / CCUG 27074 / LMG 4051 / NBRC 15346 / NCIMB 9279 / VKM B-1422 / R1).